A 399-amino-acid polypeptide reads, in one-letter code: Probable F-box protein At4g22060 (399 aa).

Positions 12-48 (SWSKLPLDLLIMVFERLGFVDFQRTKSVCLAWLYASR) constitute an F-box domain.

This Arabidopsis thaliana (Mouse-ear cress) protein is Probable F-box protein At4g22060.